Reading from the N-terminus, the 511-residue chain is MKLKTRILPFESAHYTVVLDQSVAKKLDVRPSDRVLVRFNGKTVVAIANIAKEFSHEHVGVYVNIAKALGISDGDEVEVEATSPPASLQAIRKKLQGLSLESDEIYQVVKDIVDGKLSELELAAFVTAVHFQGMTPSEIYSFTLSMVETGQRLRLKRKPILDKHSLGGVPGDKTSLLVVPIIASLGFTIPKTSSRAITSAAGTADRMEVLAPVNLSIDEIERIVEKTNACLVWGGALNLAPADDIIIRVEYPLGIDPFYIPSILAKKLAVGSTHVVLDVPTGRGTKVKTLEEAKRISQSFFEIARMFGMNLQAVATYAEEPIGHAIGPALEAREALIALRELRPGDLVDKAASLAGTLLEMVGVENGYETAMEALRTGKAEKKLREIIEAQGGDPDVTPEEIPLGDKTYTLYSEEDGFVYYIDNSLLANIGKIAGAPIDKGAGVYIHVKLGEKVRKGDPLLTVYSSSSAKLQAVERILEDSKPVLVGRTAGRRMLLERIQYQPPRQLVLER.

AMP contacts are provided by residues Gly-168, Ser-194–Ser-199, and Thr-203. Asp-256 (proton donor) is an active-site residue. AMP is bound by residues Ser-262 and Lys-286.

This sequence belongs to the thymidine/pyrimidine-nucleoside phosphorylase family. Type 2 subfamily.

It catalyses the reaction AMP + phosphate = alpha-D-ribose 1,5-bisphosphate + adenine. It carries out the reaction CMP + phosphate = cytosine + alpha-D-ribose 1,5-bisphosphate. The enzyme catalyses UMP + phosphate = alpha-D-ribose 1,5-bisphosphate + uracil. Functionally, catalyzes the conversion of AMP and phosphate to adenine and ribose 1,5-bisphosphate (R15P). Exhibits phosphorylase activity toward CMP and UMP in addition to AMP. Functions in an archaeal AMP degradation pathway, together with R15P isomerase and RubisCO. The protein is AMP phosphorylase of Thermofilum pendens (strain DSM 2475 / Hrk 5).